Reading from the N-terminus, the 446-residue chain is Gamma-glutamyl phosphate reductase (446 aa).

The protein belongs to the gamma-glutamyl phosphate reductase family.

It localises to the cytoplasm. The catalysed reaction is L-glutamate 5-semialdehyde + phosphate + NADP(+) = L-glutamyl 5-phosphate + NADPH + H(+). It functions in the pathway amino-acid biosynthesis; L-proline biosynthesis; L-glutamate 5-semialdehyde from L-glutamate: step 2/2. Catalyzes the NADPH-dependent reduction of L-glutamate 5-phosphate into L-glutamate 5-semialdehyde and phosphate. The product spontaneously undergoes cyclization to form 1-pyrroline-5-carboxylate. This chain is Gamma-glutamyl phosphate reductase, found in Sulfurihydrogenibium sp. (strain YO3AOP1).